A 180-amino-acid polypeptide reads, in one-letter code: MKNNTIRNVVATGIGAALFVVIGMINIPTPVPNTSIQLQYPLQALFSVIFGPIVGFLMGFIGHAIKDAMSGGGLWWFWIAGSGVFGLLVGFFRKFFRVEEGKFEVKDIIRFNLIQFGANAIAWLIGPIGDVIVSGEPVNKVIAQSIVAILVNSATVAVIGTVLLTAYARTRTRAGSLKKD.

5 helical membrane passes run Val-9–Thr-29, Leu-45–Ile-65, Gly-72–Phe-92, Leu-113–Val-133, and Ile-146–Ala-166.

This sequence belongs to the UPF0397 family.

It is found in the cell membrane. The protein is UPF0397 protein SSA_0592 of Streptococcus sanguinis (strain SK36).